The primary structure comprises 311 residues: Pyrimidine-specific ribonucleoside hydrolase RihA (311 aa).

Residue His-240 is part of the active site.

This sequence belongs to the IUNH family. RihA subfamily.

In terms of biological role, hydrolyzes with equal efficiency cytidine or uridine to ribose and cytosine or uracil, respectively. The chain is Pyrimidine-specific ribonucleoside hydrolase RihA from Escherichia coli O139:H28 (strain E24377A / ETEC).